We begin with the raw amino-acid sequence, 350 residues long: DNA polymerase IV (350 aa).

Positions 5 to 181 constitute a UmuC domain; the sequence is IMHYDMDAFY…KKIKIIPGVG (177 aa). Mg(2+) contacts are provided by aspartate 9 and aspartate 99. Residue glutamate 100 is part of the active site.

It belongs to the DNA polymerase type-Y family. Monomer. Requires Mg(2+) as cofactor.

Its subcellular location is the cytoplasm. It catalyses the reaction DNA(n) + a 2'-deoxyribonucleoside 5'-triphosphate = DNA(n+1) + diphosphate. Its function is as follows. Poorly processive, error-prone DNA polymerase involved in untargeted mutagenesis. Copies undamaged DNA at stalled replication forks, which arise in vivo from mismatched or misaligned primer ends. These misaligned primers can be extended by PolIV. Exhibits no 3'-5' exonuclease (proofreading) activity. May be involved in translesional synthesis, in conjunction with the beta clamp from PolIII. The sequence is that of DNA polymerase IV from Fusobacterium nucleatum subsp. nucleatum (strain ATCC 25586 / DSM 15643 / BCRC 10681 / CIP 101130 / JCM 8532 / KCTC 2640 / LMG 13131 / VPI 4355).